We begin with the raw amino-acid sequence, 234 residues long: Leucyl/phenylalanyl-tRNA--protein transferase (234 aa).

It belongs to the L/F-transferase family.

Its subcellular location is the cytoplasm. It catalyses the reaction N-terminal L-lysyl-[protein] + L-leucyl-tRNA(Leu) = N-terminal L-leucyl-L-lysyl-[protein] + tRNA(Leu) + H(+). The catalysed reaction is N-terminal L-arginyl-[protein] + L-leucyl-tRNA(Leu) = N-terminal L-leucyl-L-arginyl-[protein] + tRNA(Leu) + H(+). The enzyme catalyses L-phenylalanyl-tRNA(Phe) + an N-terminal L-alpha-aminoacyl-[protein] = an N-terminal L-phenylalanyl-L-alpha-aminoacyl-[protein] + tRNA(Phe). Functions in the N-end rule pathway of protein degradation where it conjugates Leu, Phe and, less efficiently, Met from aminoacyl-tRNAs to the N-termini of proteins containing an N-terminal arginine or lysine. This is Leucyl/phenylalanyl-tRNA--protein transferase from Enterobacter sp. (strain 638).